Consider the following 109-residue polypeptide: Peptide chaperone MftB (109 aa).

It belongs to the peptide chaperone MftB family. Interacts with MftA and MftC.

In terms of biological role, peptide chaperone involved in the biosynthesis of the enzyme cofactor mycofactocin (MFT). Binds MftA and MftC with high affinity, and is essential for MftC activity on MftA, likely via the formation of a ternary complex. This Mycobacterium ulcerans (strain Agy99) protein is Peptide chaperone MftB.